Reading from the N-terminus, the 100-residue chain is Urease subunit gamma (100 aa).

Belongs to the urease gamma subunit family. Heterotrimer of UreA (gamma), UreB (beta) and UreC (alpha) subunits. Three heterotrimers associate to form the active enzyme.

Its subcellular location is the cytoplasm. The catalysed reaction is urea + 2 H2O + H(+) = hydrogencarbonate + 2 NH4(+). Its pathway is nitrogen metabolism; urea degradation; CO(2) and NH(3) from urea (urease route): step 1/1. This is Urease subunit gamma from Thermosynechococcus vestitus (strain NIES-2133 / IAM M-273 / BP-1).